A 316-amino-acid chain; its full sequence is MAALIRCCSSFSHTSGGQPPPRDKSRAPEIGKFATSIGYSVVRKPGDHPPFSKIIHSSSQPKERQGKGILQTPFASVGSLDKFSAFEGIGRLKLPVMAVLLTNSLQMATPLEALAAEICEPESSMFSMPILLLVALIGATVGGLLARQRKGELQRLNEQLRQINAALRRQAKIESYAPSLSYAPVGARIPDSEIIVEPKKQELISKLKTGKTFLRNQEPEKAYTEFKIALELAQSLKDPTEEKKAARGLGASLQRQGKYREAIQYHSMVLAISKRESEDSGITEAYGAIADCYTELGDLEKAGKFYDTYIARLETD.

Residues 1–26 (MAALIRCCSSFSHTSGGQPPPRDKSR) constitute a chloroplast transit peptide. The helical transmembrane segment at 125–145 (MFSMPILLLVALIGATVGGLL) threads the bilayer. Residues 144–175 (LLARQRKGELQRLNEQLRQINAALRRQAKIES) adopt a coiled-coil conformation. TPR repeat units follow at residues 203–236 (LISK…AQSL), 243–276 (KKAA…SKRE), and 283–316 (TEAY…LETD).

As to quaternary structure, part of the FLU-containing chloroplast membrane complex composed of FLU, CRD1, PORB, PORC, CHLP and HEMA1. Interacts with HEMA1 (via C-terminus) only in the absence of light. No interaction with HEMA2.

The protein localises to the plastid. It localises to the chloroplast membrane. It is found in the chloroplast thylakoid membrane. In terms of biological role, negative regulator of tetrapyrrole biosynthesis (including chlorophyll) in chloroplasts, probably via HEMA1 repression. Inhibits especially the magnesium ion Mg(2+) branch of tetrapyrrole biosynthesis, but independently of heme. This is Protein FLUORESCENT IN BLUE LIGHT, chloroplastic (FLU) from Arabidopsis thaliana (Mouse-ear cress).